A 172-amino-acid polypeptide reads, in one-letter code: uncharacterized protein (172 aa).

A HotDog ACOT-type domain is found at 10–122 (KESKVVKTSR…FLTFVALDSN (113 aa)). Residues 148–172 (RANERKNRKRHSQALANALGTDKPW) form a disordered region.

It belongs to the acyl coenzyme A hydrolase family.

This is an uncharacterized protein from Bacillus subtilis (strain 168).